The sequence spans 499 residues: MYKPKISCLLLGLLSGLVFAPTFLLPALLTLSYLCCLVQKSKDWQEAAKLGYIFGFGHFLSGIYWISIGVSVYISDFWWAIPFALFGLPIILAFFVSASCVFSFFVRNNKYYHFIFCLYWVLFEWVRSWIFTGLPWNLIGYAFSFSDILIQSLNIIGIYGLSFIVIYISTSFYPFFTKQFDQLKVLLLTSSITLAVIITYGSVRLHNHPTNFTDIKVRLVQPSIPQTEKWSEEEFWHNLMLHINLSENSQPIDLVIWSEAALVVPYDIPVVKSELLGLLNSVDATLITGGISDNKKRGEDFELYTAMYALEKNGNKLFEYHKSHLVPFGEYMPFKKILPFKKLTHGFVDYTEGNGGLVYLDKYNLKIKPLICYESIFPDFVRTNNETADVIINVTNDAWYGKSSGPYQHFHISRSRAVENGLPMVRVANNGISAIIDPLGRVIKKLDLNEINYIDGLIPKKLDSPTIFSKFGNITILLIVFFIFLVNYLLDKKLINSRD.

6 consecutive transmembrane segments (helical) span residues 9-29, 50-70, 77-97, 114-134, 148-168, and 183-203; these read LLLG…PALL, LGYI…SIGV, FWWA…FFVS, FIFC…FTGL, ILIQ…VIYI, and LKVL…YGSV. The 245-residue stretch at 220 to 464 folds into the CN hydrolase domain; it reads VQPSIPQTEK…DGLIPKKLDS (245 aa). E259 (proton acceptor) is an active-site residue. The active site involves K322. C372 serves as the catalytic Nucleophile. Residues 466–486 traverse the membrane as a helical segment; sequence TIFSKFGNITILLIVFFIFLV.

It belongs to the CN hydrolase family. Apolipoprotein N-acyltransferase subfamily.

It is found in the cell inner membrane. The catalysed reaction is N-terminal S-1,2-diacyl-sn-glyceryl-L-cysteinyl-[lipoprotein] + a glycerophospholipid = N-acyl-S-1,2-diacyl-sn-glyceryl-L-cysteinyl-[lipoprotein] + a 2-acyl-sn-glycero-3-phospholipid + H(+). It participates in protein modification; lipoprotein biosynthesis (N-acyl transfer). Functionally, catalyzes the phospholipid dependent N-acylation of the N-terminal cysteine of apolipoprotein, the last step in lipoprotein maturation. The sequence is that of Apolipoprotein N-acyltransferase from Rickettsia bellii (strain RML369-C).